A 352-amino-acid chain; its full sequence is Methylthioribose-1-phosphate isomerase (352 aa).

Substrate contacts are provided by residues 49–51, Arg93, and Gln202; that span reads RGA. The active-site Proton donor is Asp243. 253–254 is a substrate binding site; the sequence is NK.

This sequence belongs to the eIF-2B alpha/beta/delta subunits family. MtnA subfamily.

The enzyme catalyses 5-(methylsulfanyl)-alpha-D-ribose 1-phosphate = 5-(methylsulfanyl)-D-ribulose 1-phosphate. It functions in the pathway amino-acid biosynthesis; L-methionine biosynthesis via salvage pathway; L-methionine from S-methyl-5-thio-alpha-D-ribose 1-phosphate: step 1/6. Functionally, catalyzes the interconversion of methylthioribose-1-phosphate (MTR-1-P) into methylthioribulose-1-phosphate (MTRu-1-P). This Magnetococcus marinus (strain ATCC BAA-1437 / JCM 17883 / MC-1) protein is Methylthioribose-1-phosphate isomerase.